The following is an 858-amino-acid chain: Bifunctional uridylyltransferase/uridylyl-removing enzyme (858 aa).

Positions 1–324 (MSAHAAPSPE…PATSGITRVL (324 aa)) are uridylyltransferase. The segment at 325–681 (SPDRFVEKQG…ARPSPIGDAL (357 aa)) is uridylyl-removing. An HD domain is found at 443–565 (VDQHILMVLR…VGNERYLTAL (123 aa)). 2 ACT domains span residues 682 to 761 (QVLV…PEPS) and 790 to 858 (ILSV…AIAV).

This sequence belongs to the GlnD family. Mg(2+) is required as a cofactor.

The enzyme catalyses [protein-PII]-L-tyrosine + UTP = [protein-PII]-uridylyl-L-tyrosine + diphosphate. It carries out the reaction [protein-PII]-uridylyl-L-tyrosine + H2O = [protein-PII]-L-tyrosine + UMP + H(+). Uridylyltransferase (UTase) activity is inhibited by glutamine, while glutamine activates uridylyl-removing (UR) activity. Functionally, modifies, by uridylylation and deuridylylation, the PII regulatory proteins (GlnB and homologs), in response to the nitrogen status of the cell that GlnD senses through the glutamine level. Under low glutamine levels, catalyzes the conversion of the PII proteins and UTP to PII-UMP and PPi, while under higher glutamine levels, GlnD hydrolyzes PII-UMP to PII and UMP (deuridylylation). Thus, controls uridylylation state and activity of the PII proteins, and plays an important role in the regulation of nitrogen fixation and metabolism. The polypeptide is Bifunctional uridylyltransferase/uridylyl-removing enzyme (Burkholderia lata (strain ATCC 17760 / DSM 23089 / LMG 22485 / NCIMB 9086 / R18194 / 383)).